The following is a 172-amino-acid chain: Small ribosomal subunit protein uS5 (172 aa).

In terms of domain architecture, S5 DRBM spans 7–70 (VVEHLVNVNR…QNAKKYMIEV (64 aa)).

Belongs to the universal ribosomal protein uS5 family. Part of the 30S ribosomal subunit. Contacts proteins S4 and S8.

With S4 and S12 plays an important role in translational accuracy. Functionally, located at the back of the 30S subunit body where it stabilizes the conformation of the head with respect to the body. The protein is Small ribosomal subunit protein uS5 of Orientia tsutsugamushi (strain Boryong) (Rickettsia tsutsugamushi).